Reading from the N-terminus, the 447-residue chain is Cysteine--tRNA ligase (447 aa).

A Zn(2+)-binding site is contributed by cysteine 28. Residues 30–40 carry the 'HIGH' region motif; it reads PTVYNYIHIGN. Residues cysteine 211, histidine 236, and glutamate 240 each contribute to the Zn(2+) site. Residues 268–272 carry the 'KMSKS' region motif; the sequence is KMSKS. Lysine 271 is an ATP binding site.

This sequence belongs to the class-I aminoacyl-tRNA synthetase family. As to quaternary structure, monomer. The cofactor is Zn(2+).

It is found in the cytoplasm. The catalysed reaction is tRNA(Cys) + L-cysteine + ATP = L-cysteinyl-tRNA(Cys) + AMP + diphosphate. This chain is Cysteine--tRNA ligase, found in Streptococcus pyogenes serotype M18 (strain MGAS8232).